A 598-amino-acid polypeptide reads, in one-letter code: Urease subunit alpha (598 aa).

Residues H141, H143, and K223 each contribute to the Ni(2+) site. K223 is modified (N6-carboxylysine). H225 contributes to the substrate binding site. Ni(2+)-binding residues include H252 and H278. The active-site Proton donor is H326. Residue D366 coordinates Ni(2+).

It belongs to the metallo-dependent hydrolases superfamily. Urease alpha subunit family. Heterotrimer of UreA (gamma), UreB (beta) and UreC (alpha) subunits. Three heterotrimers associate to form the active enzyme. It depends on Ni cation as a cofactor. Carboxylation allows a single lysine to coordinate two nickel ions.

The protein resides in the cytoplasm. It catalyses the reaction urea + 2 H2O + H(+) = hydrogencarbonate + 2 NH4(+). Its pathway is nitrogen metabolism; urea degradation; CO(2) and NH(3) from urea (urease route): step 1/1. The sequence is that of Urease subunit alpha from Ureaplasma parvum serovar 3 (strain ATCC 27815 / 27 / NCTC 11736).